The chain runs to 446 residues: Hepatocyte nuclear factor 4-beta (446 aa).

A DNA-binding region (nuclear receptor) is located at residues 47–122 (NSFCAICGDR…AGMKKEAVQN (76 aa)). NR C4-type zinc fingers lie at residues 50-70 (CAICGDRATGKHYGASSCDGC) and 86-110 (CRFSRQCIVDKDKRNQCRYCRLRKC). The 230-residue stretch at 137–366 (NGSLSINVLT…SLLQELLLGG (230 aa)) folds into the NR LBD domain.

The protein belongs to the nuclear hormone receptor family. NR2 subfamily. Homodimerization is required for HNF4-alpha to bind to its recognition site. In terms of tissue distribution, expressed in liver, kidney, stomach, intestine, lung, ovary, and testis. Not expressed in fat, muscle and brain.

It localises to the nucleus. Functionally, transcription factor; binds and activates the promoter for the HNF1-alpha gene. Seems to have a lower DNA binding activity than HNF4-alpha and is a weaker transactivator than the alpha isoform. The protein is Hepatocyte nuclear factor 4-beta (hnf4b) of Xenopus laevis (African clawed frog).